We begin with the raw amino-acid sequence, 505 residues long: MIQIDFRKKINWHRRYRSPQGVKTEHEILRIFESDRGRIINSPAIRRLQQKTQVFPLERNAAVRTRLTHSLEVQQVGRYIAKEILSRLKEQDLLKTYGLDELTGPFESIVEMSCLMHDIGNPPFGHFGEAAINDWFRQRLFPADAESQPLSDDRCIVALLRLREGEETLNELRRKVRQDLCHFEGNAQGIRLVHTLMRMNLTWAQVGGILKYTRPAWWRGQPPATHHYLMKKPGYYLSEEPYIARLRKELNLALYSRFPLTWIMEAADDISYCVADLEDAVEKNIFSVEQLYHHLHEAWGEHEKGSLFAQVVENAWEKSHVNSLSRSTEDQFFMYLRVNTLNKLVPHAAQRFIDNLAEIFEGTFNHALLEDNSSYSRLLELYKNVAQKHVFSHPEVEQLELQGYRVISGLLEIYRPLLSLPLSDFAELVEKERLKRFPIESRLFQKLSTRHRLAYVEAVGKLSSDSPEYPILEYYYRCRLLQDYISGMTDLYAWDEYRRLMAVEQ.

The HD domain occupies 66-273 (RLTHSLEVQQ…MEAADDISYC (208 aa)).

Belongs to the dGTPase family. Type 1 subfamily. As to quaternary structure, homotetramer. Mg(2+) is required as a cofactor.

The catalysed reaction is dGTP + H2O = 2'-deoxyguanosine + triphosphate + H(+). Functionally, dGTPase preferentially hydrolyzes dGTP over the other canonical NTPs. The sequence is that of Deoxyguanosinetriphosphate triphosphohydrolase from Escherichia fergusonii (strain ATCC 35469 / DSM 13698 / CCUG 18766 / IAM 14443 / JCM 21226 / LMG 7866 / NBRC 102419 / NCTC 12128 / CDC 0568-73).